The chain runs to 339 residues: Biotin synthase (339 aa).

Positions phenylalanine 47 to arginine 276 constitute a Radical SAM core domain. Residues cysteine 65, cysteine 69, and cysteine 72 each coordinate [4Fe-4S] cluster. Cysteine 109, cysteine 141, cysteine 201, and arginine 271 together coordinate [2Fe-2S] cluster.

It belongs to the radical SAM superfamily. Biotin synthase family. As to quaternary structure, homodimer. It depends on [4Fe-4S] cluster as a cofactor. Requires [2Fe-2S] cluster as cofactor.

The enzyme catalyses (4R,5S)-dethiobiotin + (sulfur carrier)-SH + 2 reduced [2Fe-2S]-[ferredoxin] + 2 S-adenosyl-L-methionine = (sulfur carrier)-H + biotin + 2 5'-deoxyadenosine + 2 L-methionine + 2 oxidized [2Fe-2S]-[ferredoxin]. The protein operates within cofactor biosynthesis; biotin biosynthesis; biotin from 7,8-diaminononanoate: step 2/2. Functionally, catalyzes the conversion of dethiobiotin (DTB) to biotin by the insertion of a sulfur atom into dethiobiotin via a radical-based mechanism. The sequence is that of Biotin synthase from Bacillus velezensis (strain DSM 23117 / BGSC 10A6 / LMG 26770 / FZB42) (Bacillus amyloliquefaciens subsp. plantarum).